Reading from the N-terminus, the 515-residue chain is Envelope glycoprotein (515 aa).

Positions 1–33 are cleaved as a signal peptide; that stretch reads MPKERRSRRRPQPIIRWVSLTLTLLSLCQPIQT. Residues 34 to 435 are Extracellular-facing; sequence WRCSLSLGNQ…LGLTAWVRET (402 aa). Asn-129 and Asn-203 each carry an N-linked (GlcNAc...) asparagine; by host glycan. A CXXC motif is present at residues 212 to 215; the sequence is CAIC. 3 cysteine pairs are disulfide-bonded: Cys-212–Cys-215, Cys-212–Cys-392, and Cys-384–Cys-391. N-linked (GlcNAc...) asparagine; by host glycosylation is found at Asn-230, Asn-251, Asn-256, Asn-271, and Asn-287. Positions 304 to 324 are fusion peptide; it reads AAALTLGLALSVGLTGINVAV. 2 coiled-coil regions span residues 330–376 and 388–420; these read QRLT…WLYI and NEPC…DWQW. An N-linked (GlcNAc...) asparagine; by host glycan is attached at Asn-351. An immunosuppression region spans residues 365-381; sequence AQNRRGLDWLYIRLGFQ. A CX6CC motif is present at residues 384-392; it reads CPTINEPCC. A glycan (N-linked (GlcNAc...) asparagine; by host) is linked at Asn-398. A helical transmembrane segment spans residues 436 to 456; that stretch reads IHSVLSLFLLALFLLFLAPCL. Cys-455 is lipidated: S-palmitoyl cysteine; by host. The Cytoplasmic segment spans residues 457–515; it reads IKCLTSRLLKLLRQAPHFPEISLAPKPDSDYQALLPSAPEIYSHLSPTKPDYINLRPCP.

As to quaternary structure, the mature envelope protein (Env) consists of a trimer of SU-TM heterodimers attached by a labile interchain disulfide bond. In terms of processing, specific enzymatic cleavages in vivo yield mature proteins. Envelope glycoproteins are synthesized as an inactive precursor that is N-glycosylated and processed likely by host cell furin or by a furin-like protease in the Golgi to yield the mature SU and TM proteins. The cleavage site between SU and TM requires the minimal sequence [KR]-X-[KR]-R. Post-translationally, the CXXC motif is highly conserved across a broad range of retroviral envelope proteins. It is thought to participate in the formation of a labile disulfide bond possibly with the CX6CC motif present in the transmembrane protein. Isomerization of the intersubunit disulfide bond to an SU intrachain disulfide bond is thought to occur upon receptor recognition in order to allow membrane fusion. The transmembrane protein is palmitoylated.

Its subcellular location is the virion membrane. The protein resides in the host cell membrane. The surface protein (SU) attaches the virus to the host cell by binding to its receptor. This interaction triggers the refolding of the transmembrane protein (TM) and is thought to activate its fusogenic potential by unmasking its fusion peptide. Fusion occurs at the host cell plasma membrane. In terms of biological role, the transmembrane protein (TM) acts as a class I viral fusion protein. Under the current model, the protein has at least 3 conformational states: pre-fusion native state, pre-hairpin intermediate state, and post-fusion hairpin state. During viral and target cell membrane fusion, the coiled coil regions (heptad repeats) assume a trimer-of-hairpins structure, positioning the fusion peptide in close proximity to the C-terminal region of the ectodomain. The formation of this structure appears to drive apposition and subsequent fusion of viral and target cell membranes. Membranes fusion leads to delivery of the nucleocapsid into the cytoplasm. The polypeptide is Envelope glycoprotein (env) (Bovine leukemia virus (isolate Belgium LB285) (BLV)).